The following is a 353-amino-acid chain: Rhodopsin (353 aa).

Residues 1-36 (MNGTEGPYFYVPMVNTSGIVRSPYEYPQYYLVNPAA) are Extracellular-facing. 2 N-linked (GlcNAc...) asparagine glycosylation sites follow: Asn-2 and Asn-15. The chain crosses the membrane as a helical span at residues 37 to 61 (YARLGAYMFLLILVGFPINFLTLYV). At 62 to 73 (TIEHKKLRTPLN) the chain is on the cytoplasmic side. Residues 74–96 (YILLNLAVADLFMVFGGFTTTMY) form a helical membrane-spanning segment. Topologically, residues 97–110 (TSMHGYFVLGRLGC) are extracellular. Cys-110 and Cys-187 are joined by a disulfide. A helical transmembrane segment spans residues 111–133 (NIEGFFATLGGEIALWSLVVLAI). The 'Ionic lock' involved in activated form stabilization signature appears at 134–136 (ERW). Over 134–152 (ERWVVVCKPISNFRFGENH) the chain is Cytoplasmic. A helical transmembrane segment spans residues 153–173 (AIMGLAFTWLMALACAAPPLV). The Extracellular segment spans residues 174-202 (GWSRYIPEGMQCSCGIDYYTRAEGFNNES). Asn-200 carries N-linked (GlcNAc...) asparagine glycosylation. The helical transmembrane segment at 203–224 (FVIYMFVCHFTVPLMVVFFCYG) threads the bilayer. Topologically, residues 225–252 (RLLCAVKEAAAAQQESETTQRAEREVTR) are cytoplasmic. A helical membrane pass occupies residues 253–274 (MVIMMVVAFLVCWLPYASVAWW). The Extracellular portion of the chain corresponds to 275–286 (IFTHQGSEFGPV). The helical transmembrane segment at 287–308 (FMTIPAFFAKSSSIYNPMIYIC) threads the bilayer. N6-(retinylidene)lysine is present on Lys-296. Residues 309–353 (LNKQFRHCMITTLCCGKNPFEEEEGASTASKTEASSVSSSSVSPA) lie on the Cytoplasmic side of the membrane. S-palmitoyl cysteine attachment occurs at residues Cys-322 and Cys-323. Positions 331-353 (EEGASTASKTEASSVSSSSVSPA) are disordered. Residues 334 to 353 (ASTASKTEASSVSSSSVSPA) show a composition bias toward low complexity.

Belongs to the G-protein coupled receptor 1 family. Opsin subfamily. Post-translationally, phosphorylated on some or all of the serine and threonine residues present in the C-terminal region. Contains one covalently linked retinal chromophore.

The protein localises to the membrane. It localises to the cell projection. The protein resides in the cilium. It is found in the photoreceptor outer segment. Photoreceptor required for image-forming vision at low light intensity. While most salt water fish species use retinal as chromophore, most freshwater fish use 3-dehydroretinal, or a mixture of retinal and 3-dehydroretinal. Light-induced isomerization of 11-cis to all-trans retinal triggers a conformational change that activates signaling via G-proteins. Subsequent receptor phosphorylation mediates displacement of the bound G-protein alpha subunit by arrestin and terminates signaling. In Sarpa salpa (Salema), this protein is Rhodopsin (rho).